Reading from the N-terminus, the 84-residue chain is Large ribosomal subunit protein bL27 (84 aa).

It belongs to the bacterial ribosomal protein bL27 family.

This chain is Large ribosomal subunit protein bL27, found in Buchnera aphidicola subsp. Schizaphis graminum (strain Sg).